The chain runs to 830 residues: DNA gyrase subunit A (830 aa).

Positions 33 to 497 constitute a Topo IIA-type catalytic domain; that stretch reads LPDVRDGLKP…AENDIDIEDL (465 aa). The active-site O-(5'-phospho-DNA)-tyrosine intermediate is the tyrosine 121. The short motif at 524-530 is the GyrA-box element; the sequence is QKRGGRG. A disordered region spans residues 805–830; sequence KDDSEQLEDSEEVSEVHDAEENNSEE.

This sequence belongs to the type II topoisomerase GyrA/ParC subunit family. In terms of assembly, heterotetramer, composed of two GyrA and two GyrB chains. In the heterotetramer, GyrA contains the active site tyrosine that forms a transient covalent intermediate with DNA, while GyrB binds cofactors and catalyzes ATP hydrolysis.

The protein resides in the cytoplasm. It carries out the reaction ATP-dependent breakage, passage and rejoining of double-stranded DNA.. In terms of biological role, a type II topoisomerase that negatively supercoils closed circular double-stranded (ds) DNA in an ATP-dependent manner to modulate DNA topology and maintain chromosomes in an underwound state. Negative supercoiling favors strand separation, and DNA replication, transcription, recombination and repair, all of which involve strand separation. Also able to catalyze the interconversion of other topological isomers of dsDNA rings, including catenanes and knotted rings. Type II topoisomerases break and join 2 DNA strands simultaneously in an ATP-dependent manner. The chain is DNA gyrase subunit A from Clostridium acetobutylicum (strain ATCC 824 / DSM 792 / JCM 1419 / IAM 19013 / LMG 5710 / NBRC 13948 / NRRL B-527 / VKM B-1787 / 2291 / W).